Reading from the N-terminus, the 532-residue chain is Chondroitin sulfate N-acetylgalactosaminyltransferase 1 (532 aa).

Residues 1–14 (MMMVRRGLLAWISR) lie on the Cytoplasmic side of the membrane. The helical; Signal-anchor for type II membrane protein transmembrane segment at 15–35 (VVVLLVLLCCAISVLYMLACT) threads the bilayer. At 36 to 532 (PKGDEEQLAL…QKQKTSSKKT (497 aa)) the chain is on the lumenal side. Positions 57–100 (YQAVLQEWEEQHRNYVSSLKRQIAQLKEELQERSEQLRNGQYQA) form a coiled coil. Asn-315 and Asn-324 each carry an N-linked (GlcNAc...) asparagine glycan. A divalent metal cation is bound by residues Asp-360 and His-477.

It belongs to the chondroitin N-acetylgalactosaminyltransferase family. N-glycosylated. Ubiquitous, with the highest levels in placenta, thyroid, bladder, prostate and adrenal gland. Detected at low levels in the other tissues examined.

The protein localises to the golgi apparatus. It is found in the golgi stack membrane. It catalyses the reaction 3-O-(beta-D-GlcA-(1-&gt;3)-beta-D-Gal-(1-&gt;3)-beta-D-Gal-(1-&gt;4)-beta-D-Xyl)-L-seryl-[protein] + UDP-N-acetyl-alpha-D-galactosamine = 3-O-(beta-D-GalNAc-(1-&gt;4)-beta-D-GlcA-(1-&gt;3)-beta-D-Gal-(1-&gt;3)-beta-D-Gal-(1-&gt;4)-beta-D-Xyl)-L-seryl-[protein] + UDP + H(+). Its function is as follows. Transfers 1,4-N-acetylgalactosamine (GalNAc) from UDP-GalNAc to the non-reducing end of glucuronic acid (GlcUA). Required for addition of the first GalNAc to the core tetrasaccharide linker and for elongation of chondroitin chains. Important role in chondroitin chain biosynthesis in cartilage formation and subsequent endochondral ossification. Moreover, is involved in the metabolism of aggrecan. This chain is Chondroitin sulfate N-acetylgalactosaminyltransferase 1, found in Homo sapiens (Human).